The primary structure comprises 160 residues: Large ribosomal subunit protein eL21 (160 aa).

Basic and acidic residues-rich tracts occupy residues 112–123 (NDQKKKEAKEKG) and 136–145 (REAHFVRTNG). A disordered region spans residues 112–145 (NDQKKKEAKEKGTWVQLKRQPAPPREAHFVRTNG).

This sequence belongs to the eukaryotic ribosomal protein eL21 family. Component of the large ribosomal subunit.

The protein resides in the cytoplasm. The protein localises to the cytosol. Its subcellular location is the endoplasmic reticulum. Component of the large ribosomal subunit. The ribosome is a large ribonucleoprotein complex responsible for the synthesis of proteins in the cell. This is Large ribosomal subunit protein eL21 from Mus musculus (Mouse).